We begin with the raw amino-acid sequence, 147 residues long: Mitochondrial import receptor subunit TOM20 homolog (147 aa).

Residues 1–3 (MVV) are Mitochondrial intermembrane-facing. A helical membrane pass occupies residues 4 to 26 (VGKTSAIAAGVCGALFLGYCIYF). The Cytoplasmic portion of the chain corresponds to 27–147 (DRKRRSDPNF…AQNLAEDDVE (121 aa)).

Belongs to the Tom20 family. Forms part of the preprotein translocase complex of the outer mitochondrial membrane (TOM complex). Interacts with tom22.

Its subcellular location is the mitochondrion outer membrane. Its function is as follows. Central component of the receptor complex responsible for the recognition and translocation of cytosolically synthesized mitochondrial preproteins. Together with tom22 functions as the transit peptide receptor at the surface of the mitochondrion outer membrane and facilitates the movement of preproteins into the tom40 translocation pore. The chain is Mitochondrial import receptor subunit TOM20 homolog (tomm20) from Xenopus tropicalis (Western clawed frog).